The following is a 348-amino-acid chain: MSDIMSTFSWLYGKPVATGKLKQLPEHFIVKEVLGYEFTGKGEHLMVKIRKTGENTKYVANEFAKFCGVKSKDISWAGLKDRHAVTEQWLSVHLPKSDHLNFVLFEVAHPGVEILEMTRHHKKLRPGDLLGNSFQLIATEVTDMDDVLARLEKVKVTGVPNYFGAQRFGHEGNNVTEARRWGRENVRTRDNTKRSFYLSAARSWIFNHIISQRITEGYFSLPVDGDILLDQNDRTVNENVTSEDCIQKIKKGELSISAALAGDNQLPTTEKALMFEQPQLDAEPDLMALIRGNRMRHERRSIELHPENLHWSVEGDQLTLNFSLTSGSFATVIVRELLQEIEVERTYD.

The active-site Nucleophile is Asp81. One can recognise a TRUD domain in the interval 158 to 304; the sequence is GVPNYFGAQR…MRHERRSIEL (147 aa).

This sequence belongs to the pseudouridine synthase TruD family.

The catalysed reaction is uridine(13) in tRNA = pseudouridine(13) in tRNA. Functionally, responsible for synthesis of pseudouridine from uracil-13 in transfer RNAs. The sequence is that of tRNA pseudouridine synthase D from Aliivibrio salmonicida (strain LFI1238) (Vibrio salmonicida (strain LFI1238)).